Reading from the N-terminus, the 126-residue chain is Phosphoribosyl-AMP cyclohydrolase (126 aa).

Asp-76 provides a ligand contact to Mg(2+). Residue Cys-77 coordinates Zn(2+). Residues Asp-78 and Asp-80 each contribute to the Mg(2+) site. The Zn(2+) site is built by Cys-94 and Cys-101.

Belongs to the PRA-CH family. As to quaternary structure, homodimer. Mg(2+) serves as cofactor. The cofactor is Zn(2+).

The protein localises to the cytoplasm. The enzyme catalyses 1-(5-phospho-beta-D-ribosyl)-5'-AMP + H2O = 1-(5-phospho-beta-D-ribosyl)-5-[(5-phospho-beta-D-ribosylamino)methylideneamino]imidazole-4-carboxamide. Its pathway is amino-acid biosynthesis; L-histidine biosynthesis; L-histidine from 5-phospho-alpha-D-ribose 1-diphosphate: step 3/9. Functionally, catalyzes the hydrolysis of the adenine ring of phosphoribosyl-AMP. This is Phosphoribosyl-AMP cyclohydrolase from Vesicomyosocius okutanii subsp. Calyptogena okutanii (strain HA).